The chain runs to 718 residues: Sodium/myo-inositol cotransporter (718 aa).

The Extracellular portion of the chain corresponds to 1-9; that stretch reads MRAVLEAAD. The helical transmembrane segment at 10-29 threads the bilayer; it reads IAVVALYFILVMCIGFFAMW. Residues 30–38 are Cytoplasmic-facing; sequence KSNRSTVSG. A helical membrane pass occupies residues 39-57; sequence YFLAGRSMTWVAIGASLFV. Over 58–86 the chain is Extracellular; it reads SNIGSEHFIGLAGSGAASGFAVGAWEFNA. A helical transmembrane segment spans residues 87 to 110; sequence LLLLQLLGWVFIPIYIRSGVYTMP. Residues 111 to 123 are Cytoplasmic-facing; that stretch reads EYLSKRFGGHRIQ. The chain crosses the membrane as a helical span at residues 124–144; that stretch reads VYFAALSLLLYIFTKLSVDLY. Residues 145–157 lie on the Extracellular side of the membrane; the sequence is SGALFIQESLGWN. Residues 158-183 traverse the membrane as a helical segment; sequence LYVSVILLIGMTALLTVTGGLVAVIY. Residues 184-186 are Cytoplasmic-facing; it reads TDT. The chain crosses the membrane as a helical span at residues 187–205; sequence LQALLMIIGALTLMVISMV. Over 206 to 303 the chain is Extracellular; sequence KIGGFEEVKR…HAKGSTLMAG (98 aa). An N-linked (GlcNAc...) asparagine glycan is attached at Asn-232. The helical transmembrane segment at 304 to 324 threads the bilayer; the sequence is FLKLLPMFIIVVPGMISRIVF. The Cytoplasmic portion of the chain corresponds to 325-353; it reads ADEIACINPEHCMQVCGSRAGCSNIAYPR. The helical transmembrane segment at 354–376 threads the bilayer; sequence LVMTLVPVGLRGLMMAVMIAALM. Over 377–406 the chain is Extracellular; that stretch reads SDLDSIFNSASTIFTLDVYKLIRKSASSRE. The helical transmembrane segment at 407–430 threads the bilayer; the sequence is LMIVGRIFVAFMVVISIAWVPIIV. Residues 431–443 lie on the Cytoplasmic side of the membrane; that stretch reads EMQGGQMYLYIQE. A helical transmembrane segment spans residues 444-462; it reads VADYLTPPVAALFLLAIFW. Over 463 to 510 the chain is Extracellular; it reads KRCNEQGAFYGGMAGFVLGAVRLILAFTYRAPECDQPDNRPGFIKDIH. Residues 511 to 532 form a helical membrane-spanning segment; sequence YMYVATALFWITGLITVIVSLL. Residues 533–695 lie on the Cytoplasmic side of the membrane; the sequence is TPPPTKDQIR…QMLEETPQVK (163 aa). Phosphoserine is present on residues Ser-594 and Ser-632. A helical membrane pass occupies residues 696–716; sequence VILNIGLFAVCSLGIFMFVYF. The Extracellular segment spans residues 717-718; it reads SL.

Belongs to the sodium:solute symporter (SSF) (TC 2.A.21) family. Interacts with KCNQ2 (via the pore module). Interacts with KCNQ1; this interaction is direct. Forms coregulatory complexes with ion channels KCNQ2-KCNQ3 and KCNQ1-KCNE2. In terms of tissue distribution, highly expressed in kidney, placenta, and brain and at a lesser extent in thymus, lung, bladder, and testes. Expressed in the choroid plexus epithelium (at protein level).

Its subcellular location is the apical cell membrane. It is found in the basolateral cell membrane. The enzyme catalyses myo-inositol(out) + 2 Na(+)(out) = myo-inositol(in) + 2 Na(+)(in). It carries out the reaction scyllo-inositol(out) + 2 Na(+)(out) = scyllo-inositol(in) + 2 Na(+)(in). Electrogenic Na(+)-coupled sugar symporter that actively transports myo-inositol and its stereoisomer scyllo-inositol across the plasma membrane, with a Na(+) to sugar coupling ratio of 2:1. Maintains myo-inositol concentration gradient that defines cell volume and fluid balance during osmotic stress, in particular in the fetoplacental unit and central nervous system. Forms coregulatory complexes with voltage-gated K(+) ion channels, allosterically altering ion selectivity, voltage dependence and gating kinetics of the channel. In turn, K(+) efflux through the channel forms a local electrical gradient that modulates electrogenic Na(+)-coupled myo-inositol influx through the transporter. Associates with KCNQ1-KCNE2 channel in the apical membrane of choroid plexus epithelium and regulates the myo-inositol gradient between blood and cerebrospinal fluid with an impact on neuron excitability. Associates with KCNQ2-KCNQ3 channel altering ion selectivity, increasing Na(+) and Cs(+) permeation relative to K(+) permeation. Provides myo-inositol precursor for biosynthesis of phosphoinositides such as PI(4,5)P2, thus indirectly affecting the activity of phosphoinositide-dependent ion channels and Ca(2+) signaling upon osmotic stress. Functionally, (Microbial infection) Functions as a retroviral receptor for M813 murine leukemia virus (MuLV) entry. This chain is Sodium/myo-inositol cotransporter (Slc5a3), found in Mus musculus (Mouse).